The chain runs to 145 residues: Large ribosomal subunit protein uL15 (145 aa).

The interval 1–50 (MRLNTLSPAAGSKPEKQRRGRGIGSGLGKTGGRGVKGQTSRSGGGKVRAG) is disordered. Residues 22-35 (GIGSGLGKTGGRGV) are compositionally biased toward gly residues.

Belongs to the universal ribosomal protein uL15 family. As to quaternary structure, part of the 50S ribosomal subunit.

Functionally, binds to the 23S rRNA. The protein is Large ribosomal subunit protein uL15 of Aeromonas salmonicida (strain A449).